A 638-amino-acid chain; its full sequence is 3D-(3,5/4)-trihydroxycyclohexane-1,2-dione hydrolase (638 aa).

Glutamate 67 is a thiamine diphosphate binding site. Residues 442-523 (SLPGDLQRLW…INIMLFDNSG (82 aa)) form a thiamine pyrophosphate binding region. Aspartate 494 and asparagine 521 together coordinate Mg(2+).

Belongs to the TPP enzyme family. The cofactor is Mg(2+). Requires thiamine diphosphate as cofactor.

It catalyses the reaction 3D-3,5/4-trihydroxycyclohexane-1,2-dione + H2O = 5-deoxy-D-glucuronate + H(+). It functions in the pathway polyol metabolism; myo-inositol degradation into acetyl-CoA; acetyl-CoA from myo-inositol: step 3/7. Its function is as follows. Involved in the cleavage of the C1-C2 bond of 3D-(3,5/4)-trihydroxycyclohexane-1,2-dione (THcHDO) to yield 5-deoxy-glucuronate (5DG). This Listeria monocytogenes serotype 4b (strain F2365) protein is 3D-(3,5/4)-trihydroxycyclohexane-1,2-dione hydrolase.